We begin with the raw amino-acid sequence, 287 residues long: Inorganic pyrophosphatase (287 aa).

Arginine 79 is a diphosphate binding site. Mg(2+)-binding residues include aspartate 116, aspartate 121, and aspartate 153.

It belongs to the PPase family. The cofactor is Mg(2+).

It localises to the cytoplasm. The catalysed reaction is diphosphate + H2O = 2 phosphate + H(+). The sequence is that of Inorganic pyrophosphatase (IPP1) from Candida glabrata (strain ATCC 2001 / BCRC 20586 / JCM 3761 / NBRC 0622 / NRRL Y-65 / CBS 138) (Yeast).